A 258-amino-acid polypeptide reads, in one-letter code: Phycoerythrobilin:ferredoxin oxidoreductase (258 aa).

Belongs to the HY2 family.

The enzyme catalyses (3Z)-phycoerythrobilin + oxidized 2[4Fe-4S]-[ferredoxin] = 15,16-dihydrobiliverdin + reduced 2[4Fe-4S]-[ferredoxin] + 2 H(+). Functionally, catalyzes the two-electron reduction of the C2 and C3(1) diene system of 15,16-dihydrobiliverdin. This Prochlorococcus marinus (strain NATL2A) protein is Phycoerythrobilin:ferredoxin oxidoreductase.